Reading from the N-terminus, the 476-residue chain is Ovarian-specific serine/threonine-protein kinase Lok (476 aa).

The region spanning 69-129 (FTAGRGEAND…NGTFVNNEKI (61 aa)) is the FHA domain. One can recognise a Protein kinase domain in the interval 174–441 (YYVNRKLGSG…IDDVLQSSWL (268 aa)). ATP is bound by residues 180 to 188 (LGSGAYGLV) and Lys-203. Asp-303 serves as the catalytic Proton acceptor.

Belongs to the protein kinase superfamily. CAMK Ser/Thr protein kinase family. CDS1 subfamily. As to expression, in stage 3 embryos, both isoforms are expressed in both somatic and pole cell nuclei. Expression in pole cell nuclei is sustained until stage 9 and weakly expressed after pole cell invagination into the abdominal cavity.

The protein localises to the nucleus speckle. It catalyses the reaction L-seryl-[protein] + ATP = O-phospho-L-seryl-[protein] + ADP + H(+). It carries out the reaction L-threonyl-[protein] + ATP = O-phospho-L-threonyl-[protein] + ADP + H(+). Functionally, may have a role in germline establishment. The sequence is that of Ovarian-specific serine/threonine-protein kinase Lok (lok) from Drosophila melanogaster (Fruit fly).